We begin with the raw amino-acid sequence, 113 residues long: MPVFLGLPVLARFIGWLAGALIAYVAKFFTLGIARIALAISLFLGLIIGLNGLLVSYLSDLTSVLPPEIASAVSYVVPANAAPCLYAIFSLKAAVFIFDVKDRIIGYLDWNKS.

3 helical membrane passes run 13–33 (FIGWLAGALIAYVAKFFTLGI), 36–56 (IALAISLFLGLIIGLNGLLVS), and 69–89 (IASAVSYVVPANAAPCLYAIF).

Belongs to the inovirus G6P protein family. Interacts with G3P; this interaction is required for proper integration of G3P and G6P into the virion.

It localises to the virion. The protein localises to the host membrane. Functionally, plays essential roles both in the entry of the viral genome into the bacterial host and in budding process. The formation of the G3P-G6P complex termed adsorption complex is essential for correct termination of filamentous phage assembly. The chain is Head virion protein G6P (VI) from Escherichia phage If1 (Bacteriophage If1).